Here is a 161-residue protein sequence, read N- to C-terminus: Nuclear transcription factor Y subunit B-3 (161 aa).

The segment at 1–23 is disordered; the sequence is MADSDNDSGGHKDGGNASTREQD. Alanine 2 carries the N-acetylalanine modification. Over residues 8 to 23 the composition is skewed to basic and acidic residues; the sequence is SGGHKDGGNASTREQD. Residues 26–32 mediate DNA binding; the sequence is LPIANVS. The tract at residues 53 to 64 is subunit association domain (SAD); that stretch reads VQECVSEFISFI. Residues 114 to 146 form a disordered region; sequence EKTTTAGRQGDKEGGGGGGGAGSGSGGAPMYGG. Over residues 128 to 146 the composition is skewed to gly residues; that stretch reads GGGGGGAGSGSGGAPMYGG.

Belongs to the NFYB/HAP3 subunit family. As to quaternary structure, heterotrimeric transcription factor composed of three components, NF-YA, NF-YB and NF-YC. NF-YB and NF-YC must interact and dimerize for NF-YA association and DNA binding. Component of a heat stress-inducible transcriptional complex with NF-YA and NF-YB subunits made, at least, of NFYA2, NFYB3 and DPB3-1 in cooperation with DREB2A. Binds directly with DPB3-1. In terms of tissue distribution, ubiquitous. Expressed in seedlings, petioles, hypocotyls, reproductive organ tissues and leaves.

The protein resides in the nucleus. It localises to the cytoplasm. The protein localises to the cytosol. In terms of biological role, component of the NF-Y/HAP transcription factor complex. The NF-Y complex stimulates the transcription of various genes by recognizing and binding to a CCAAT motif in promoters. Promotes the expression of heat stress-inducible genes by contributing to the formation of a heat stress-specific transcriptional complex with NF-Y subunits (e.g. DPB3-1, NF-YA2 and NF-YB3) and DREB2A at the promoter of target genes, thus promoting heat tolerance. In Arabidopsis thaliana (Mouse-ear cress), this protein is Nuclear transcription factor Y subunit B-3.